The sequence spans 372 residues: GTP cyclohydrolase 1 type 2 homolog (372 aa).

Positions 67, 68, 106, 332, and 335 each coordinate a divalent metal cation.

The protein belongs to the GTP cyclohydrolase I type 2/NIF3 family. In terms of assembly, homohexamer.

The sequence is that of GTP cyclohydrolase 1 type 2 homolog from Halalkalibacterium halodurans (strain ATCC BAA-125 / DSM 18197 / FERM 7344 / JCM 9153 / C-125) (Bacillus halodurans).